Reading from the N-terminus, the 265-residue chain is Osteoclast-associated immunoglobulin-like receptor (265 aa).

Residues 1–18 (MVLSLILQLSTLWPACRA) form the signal peptide. Residues 19–231 (DFTPTAPLAS…LDYTQGNLIR (213 aa)) lie on the Extracellular side of the membrane. Ig-like domains lie at 22–115 (PTAP…SQPS) and 125–218 (QLPR…SFEG). N-linked (GlcNAc...) asparagine glycosylation is present at asparagine 47. A disulfide bridge links cysteine 52 with cysteine 99. N-linked (GlcNAc...) asparagine glycosylation is present at asparagine 144. Residues 232-248 (LGLAGMVLICLGIIVTC) form a helical membrane-spanning segment. Residues 249-265 (DWHSRSSAFDGLLPQQN) lie on the Cytoplasmic side of the membrane.

This sequence belongs to the leukocyte receptor complex/polymeric immunoglobulin receptor (PIR/LRC) family. As to expression, specifically expressed in preosteoclasts or mature osteoclasts.

The protein localises to the cell membrane. Regulator of osteoclastogenesis which plays an important bone-specific function in osteoclast differentiation. This chain is Osteoclast-associated immunoglobulin-like receptor (Oscar), found in Mus musculus (Mouse).